A 202-amino-acid polypeptide reads, in one-letter code: Endothelin-1 (202 aa).

The first 25 residues, 1 to 25, serve as a signal peptide directing secretion; sequence MDYFPMIFALLFVAFQGAPEAAVLG. A propeptide spanning residues 26 to 50 is cleaved from the precursor; it reads TELSAGAEDGGEKPAPATPWRPRRS. 2 disulfides stabilise this stretch: C53–C67 and C55–C63. A propeptide spanning residues 74 to 202 is cleaved from the precursor; sequence VNTPEHVVPY…DKKVIYNRAH (129 aa). The segment at 110 to 124 is endothelin-like; that stretch reads CQCASQTDKKCWNFC.

This sequence belongs to the endothelin/sarafotoxin family.

The protein localises to the secreted. Its function is as follows. Endothelins are endothelium-derived vasoconstrictor peptides. Probable ligand for G-protein coupled receptors EDNRA and EDNRB which activates PTK2B, BCAR1, BCAR3 and, GTPases RAP1 and RHOA cascade in glomerular mesangial cells. Also binds the DEAR/FBXW7-AS1 receptor. Promotes mesenteric arterial wall remodeling via activation of ROCK signaling and subsequent colocalization of NFATC3 with F-actin filaments. NFATC3 then translocates to the nucleus where it subsequently promotes the transcription of the smooth muscle hypertrophy and differentiation marker ACTA2. This Bos taurus (Bovine) protein is Endothelin-1 (EDN1).